Reading from the N-terminus, the 540-residue chain is 2,3-bisphosphoglycerate-independent phosphoglycerate mutase (540 aa).

Positions 24 and 74 each coordinate Mn(2+). Ser-74 serves as the catalytic Phosphoserine intermediate. Residues His-135, 165–166 (RD), Arg-197, Arg-203, 268–271 (RPDR), and Lys-341 contribute to the substrate site. Residues Asp-408, His-412, Asp-449, His-450, and His-467 each contribute to the Mn(2+) site.

This sequence belongs to the BPG-independent phosphoglycerate mutase family. As to quaternary structure, monomer. Mn(2+) serves as cofactor.

It catalyses the reaction (2R)-2-phosphoglycerate = (2R)-3-phosphoglycerate. It functions in the pathway carbohydrate degradation; glycolysis; pyruvate from D-glyceraldehyde 3-phosphate: step 3/5. Catalyzes the interconversion of 2-phosphoglycerate and 3-phosphoglycerate. This chain is 2,3-bisphosphoglycerate-independent phosphoglycerate mutase, found in Prochlorococcus marinus (strain MIT 9313).